The primary structure comprises 91 residues: Small ribosomal subunit protein uS15 (91 aa).

It belongs to the universal ribosomal protein uS15 family. Part of the 30S ribosomal subunit. Forms a bridge to the 50S subunit in the 70S ribosome, contacting the 23S rRNA.

Functionally, one of the primary rRNA binding proteins, it binds directly to 16S rRNA where it helps nucleate assembly of the platform of the 30S subunit by binding and bridging several RNA helices of the 16S rRNA. Forms an intersubunit bridge (bridge B4) with the 23S rRNA of the 50S subunit in the ribosome. This is Small ribosomal subunit protein uS15 from Cytophaga hutchinsonii (strain ATCC 33406 / DSM 1761 / CIP 103989 / NBRC 15051 / NCIMB 9469 / D465).